The following is a 770-amino-acid chain: U3 small nucleolar RNA-associated protein 14 homolog A (770 aa).

Residues 1 to 17 (MNANQAAESNLLASNQQ) show a composition bias toward polar residues. The interval 1 to 65 (MNANQAAESN…GKDRQKLADR (65 aa)) is disordered. Phosphoserine is present on residues Ser30, Ser32, and Ser53. The stretch at 41–68 (ERKHQKLLESISSLNGKDRQKLADRSEA) forms a coiled coil. The span at 56 to 65 (GKDRQKLADR) shows a compositional bias: basic and acidic residues. Ser78 and Ser82 each carry phosphoserine. Position 206 is a phosphothreonine (Thr206). Coiled-coil stretches lie at residues 217–291 (SLEE…DKAR) and 318–348 (LEAR…EEEG). Disordered regions lie at residues 334–361 (LTQK…LVPD), 392–455 (KDLE…SSQE), and 467–505 (LRTE…RPER). Acidic residues-rich tracts occupy residues 343–358 (ESEE…EEPL) and 396–410 (DPAE…ESEE). Ser406 and Ser408 each carry phosphoserine. The segment covering 411–444 (EKAVVEEETLLKEFEERRSLRQKSELNHMAEPVH) has biased composition (basic and acidic residues). Lys449 is covalently cross-linked (Glycyl lysine isopeptide (Lys-Gly) (interchain with G-Cter in SUMO2)). The residue at position 453 (Ser453) is a Phosphoserine. Ser567 carries the post-translational modification Phosphoserine. Arg588 is subject to Citrulline. A Glycyl lysine isopeptide (Lys-Gly) (interchain with G-Cter in SUMO2) cross-link involves residue Lys732.

Belongs to the UTP14 family. In terms of assembly, interacts with DHX37. Post-translationally, citrullinated by PADI4.

The protein resides in the nucleus. It localises to the nucleolus. May be required for ribosome biogenesis. The chain is U3 small nucleolar RNA-associated protein 14 homolog A (UTP14A) from Bos taurus (Bovine).